The sequence spans 421 residues: Enolase (421 aa).

Gln162 lines the (2R)-2-phosphoglycerate pocket. Glu204 functions as the Proton donor in the catalytic mechanism. Residues Asp241, Glu284, and Asp311 each coordinate Mg(2+). Residues Lys336, Arg365, Ser366, and Lys387 each contribute to the (2R)-2-phosphoglycerate site. Residue Lys336 is the Proton acceptor of the active site.

Belongs to the enolase family. Mg(2+) is required as a cofactor.

It localises to the cytoplasm. It is found in the secreted. The protein resides in the cell surface. The catalysed reaction is (2R)-2-phosphoglycerate = phosphoenolpyruvate + H2O. It functions in the pathway carbohydrate degradation; glycolysis; pyruvate from D-glyceraldehyde 3-phosphate: step 4/5. Its function is as follows. Catalyzes the reversible conversion of 2-phosphoglycerate (2-PG) into phosphoenolpyruvate (PEP). It is essential for the degradation of carbohydrates via glycolysis. This Nitratiruptor sp. (strain SB155-2) protein is Enolase.